The sequence spans 450 residues: SAGA complex/transcription factor TFIID complex subunit Taf12 (450 aa).

3 stretches are compositionally biased toward polar residues: residues M1–T10, P19–R29, and Q190–T212. 2 disordered regions span residues M1 to R29 and Q190 to S281. Low complexity predominate over residues S217–Q236. 2 stretches are compositionally biased toward polar residues: residues R237–P246 and A255–S281. Position 297 is a phosphoserine (S297). Positions N338–L413 constitute a Histone-fold domain. Residues R426 to D450 form a disordered region. Residues P430–I441 are compositionally biased toward polar residues.

This sequence belongs to the TAF12 family. Component of the 1.8 MDa SAGA (Spt-Ada-Gcn5 acetyltransferase) complex, which is composed of 19 subunits tra1, spt7, taf5, ngg1/ada3, sgf73, spt20, spt8, taf12, taf6, hfi1/ada1, ubp8, gcn5, ada2, spt3, sgf29, taf10, taf9, sgf11 and sus1. The SAGA complex is composed of 4 modules, namely the HAT (histone acetyltransferase) module (gcn5, ada2, ngg1/ada3 and sgf29), the DUB (deubiquitinating) module (ubp8, sgf11, sgf73 and sus1), the core or TAF (TBP-associated factor) module (taf5, taf6, taf9, taf10 and taf12), and the Tra1 or SPT (Suppressor of Ty) module (tra1, hfi1/ada1, spt3, spt7, spt8 and spt20). The Tra1/SPT module binds activators, the core module recruits TBP (TATA-binding protein), the HAT module contains the histone H3 acetyltransferase gcn5, and the DUB module comprises the histone H2B deubiquitinase ubp8. Component of the 1.2 MDa TFIID complex, which is composed of TATA-binding protein (TBP) and the 14 TBP-associated factors (TAFs). It comprises 1 copy of each taf1, taf2, taf3, taf7, taf8, taf11, taf13, 2 copies of each taf4, taf5, taf6, taf9, taf10, taf12, and 3 copies of taf14. In TFIID, taf12 heterodimerizes with taf4, forming ultimately an octamer consisting of a taf6-taf9 heterotetramer core flanked by taf4-taf12 dimers on either side, similar to the histone H2A-H2B-H3-H4 octamer.

The protein localises to the nucleus. Functions as a component of both the DNA-binding general transcription initiation factor complex TFIID and the transcription coactivator SAGA complex. Binding of TFIID to a promoter (with or without TATA element) is the initial step in pre-initiation complex (PIC) formation. TFIID plays a key role in the regulation of gene expression by RNA polymerase II through different activities such as transcription activator interaction, core promoter recognition and selectivity, TFIIA and TFIIB interaction, chromatin modification (histone acetylation by TAF1), facilitation of DNA opening and initiation of transcription. SAGA acts as a general cofactor required for essentially all RNA polymerase II transcription. At the promoters, SAGA is required for transcription pre-initiation complex (PIC) recruitment. It influences RNA polymerase II transcriptional activity through different activities such as TBP interaction (via core/TAF module) and promoter selectivity, interaction with transcription activators (via Tra1/SPT module), and chromatin modification through histone acetylation (via HAT module) and deubiquitination (via DUB module). SAGA preferentially acetylates histones H3 (to form H3K9ac, H3K14ac, H3K18ac and H3K23ac) and H2B and deubiquitinates histone H2B. SAGA interacts with DNA via upstream activating sequences (UASs). This Schizosaccharomyces pombe (strain 972 / ATCC 24843) (Fission yeast) protein is SAGA complex/transcription factor TFIID complex subunit Taf12.